The primary structure comprises 484 residues: Aspartyl/glutamyl-tRNA(Asn/Gln) amidotransferase subunit B (484 aa).

It belongs to the GatB/GatE family. GatB subfamily. As to quaternary structure, heterotrimer of A, B and C subunits.

It catalyses the reaction L-glutamyl-tRNA(Gln) + L-glutamine + ATP + H2O = L-glutaminyl-tRNA(Gln) + L-glutamate + ADP + phosphate + H(+). The enzyme catalyses L-aspartyl-tRNA(Asn) + L-glutamine + ATP + H2O = L-asparaginyl-tRNA(Asn) + L-glutamate + ADP + phosphate + 2 H(+). Allows the formation of correctly charged Asn-tRNA(Asn) or Gln-tRNA(Gln) through the transamidation of misacylated Asp-tRNA(Asn) or Glu-tRNA(Gln) in organisms which lack either or both of asparaginyl-tRNA or glutaminyl-tRNA synthetases. The reaction takes place in the presence of glutamine and ATP through an activated phospho-Asp-tRNA(Asn) or phospho-Glu-tRNA(Gln). The protein is Aspartyl/glutamyl-tRNA(Asn/Gln) amidotransferase subunit B of Bordetella bronchiseptica (strain ATCC BAA-588 / NCTC 13252 / RB50) (Alcaligenes bronchisepticus).